We begin with the raw amino-acid sequence, 525 residues long: BTB/POZ domain-containing protein At1g50280 (525 aa).

The BTB domain maps to 5–79 (NDLKINLNGQ…CYHNGEILID (75 aa)). The 267-residue stretch at 200 to 466 (EWWFEDMTNL…IEALKSRCGN (267 aa)) folds into the NPH3 domain.

It belongs to the NPH3 family.

It functions in the pathway protein modification; protein ubiquitination. Its function is as follows. May act as a substrate-specific adapter of an E3 ubiquitin-protein ligase complex (CUL3-RBX1-BTB) which mediates the ubiquitination and subsequent proteasomal degradation of target proteins. The sequence is that of BTB/POZ domain-containing protein At1g50280 from Arabidopsis thaliana (Mouse-ear cress).